The primary structure comprises 1390 residues: DNA-directed RNA polymerase subunit beta (1390 aa).

The tract at residues 556-576 is disordered; the sequence is KLADQDAENDPDSDLGTKSSN.

Belongs to the RNA polymerase beta chain family. In terms of assembly, the RNAP catalytic core consists of 2 alpha, 1 beta, 1 beta' and 1 omega subunit. When a sigma factor is associated with the core the holoenzyme is formed, which can initiate transcription.

It carries out the reaction RNA(n) + a ribonucleoside 5'-triphosphate = RNA(n+1) + diphosphate. Functionally, DNA-dependent RNA polymerase catalyzes the transcription of DNA into RNA using the four ribonucleoside triphosphates as substrates. In Mycoplasmoides gallisepticum (strain R(low / passage 15 / clone 2)) (Mycoplasma gallisepticum), this protein is DNA-directed RNA polymerase subunit beta.